Here is a 546-residue protein sequence, read N- to C-terminus: Thermolysin (546 aa).

The first 25 residues, 1-25 (MDKRAMLGAIGLAFGLMAWPFGASA), serve as a signal peptide directing secretion. The propeptide at 26-228 (KEKSMVWNEQ…EAKPGGGQPV (203 aa)) is activation peptide. Positions 287, 289, 291, and 368 each coordinate Ca(2+). Residue His-372 participates in Zn(2+) binding. Residue Glu-373 is part of the active site. Zn(2+) contacts are provided by His-376 and Glu-396. Ca(2+)-binding residues include Asn-413, Asp-415, Glu-417, Glu-420, Tyr-423, Thr-424, Ile-427, and Asp-430. Residue His-461 is the Proton donor of the active site.

It belongs to the peptidase M4 family. Ca(2+) is required as a cofactor. Requires Zn(2+) as cofactor.

It is found in the secreted. It catalyses the reaction Preferential cleavage: Xaa-|-Leu &gt; Xaa-|-Phe.. Its function is as follows. Extracellular zinc metalloprotease. The chain is Thermolysin (npr) from Bacillus caldolyticus.